A 514-amino-acid polypeptide reads, in one-letter code: Xylose import ATP-binding protein XylG (514 aa).

ABC transporter domains lie at Phe-7 to Glu-246 and Leu-263 to Glu-508. ATP is bound at residue Gly-39–Ser-46.

It belongs to the ABC transporter superfamily. Xylose importer (TC 3.A.1.2.4) family. In terms of assembly, the complex is composed of two ATP-binding proteins (XylG), two transmembrane proteins (XylH) and a solute-binding protein (XylF).

The protein resides in the cell inner membrane. It carries out the reaction D-xylose(out) + ATP + H2O = D-xylose(in) + ADP + phosphate + H(+). Part of the ABC transporter complex XylFGH involved in xylose import. Responsible for energy coupling to the transport system. In Ralstonia nicotianae (strain ATCC BAA-1114 / GMI1000) (Ralstonia solanacearum), this protein is Xylose import ATP-binding protein XylG.